A 910-amino-acid polypeptide reads, in one-letter code: Lysine-specific demethylase 7 homolog (910 aa).

Over residues 1-11 the composition is skewed to polar residues; that stretch reads MDGNDINIQKN. 3 disordered regions span residues 1–58, 103–162, and 183–212; these read MDGN…HQTP, NKMG…GSEP, and QEELKLEVDSDSEEDDVPEQKTPKESDRCG. Over residues 25-35 the composition is skewed to basic and acidic residues; it reads QHSDHKNHESA. The span at 43 to 58 shows a compositional bias: polar residues; sequence YTASQPALSSTEHQTP. Over residues 118 to 130 the composition is skewed to basic and acidic residues; that stretch reads PKSEPKIEPHVTD. Residues 150–160 show a composition bias toward polar residues; the sequence is ESNQNYVSNGS. A compositionally biased stretch (basic and acidic residues) spans 200 to 210; that stretch reads PEQKTPKESDR. Residues 208-290 form a PHD-type zinc finger; sequence SDRCGGCGKF…KFFCPKCVPH (83 aa). Residues 441–612 enclose the JmjC domain; the sequence is SDNNEMKEIA…MQMRVYHLEN (172 aa). Substrate-binding positions include 505 to 510, Tyr518, Lys525, and His580; that span reads TDFHVD. His508 and Asp510 together coordinate Fe cation. His580 is a binding site for Fe cation. 2 disordered regions span residues 712-790 and 864-910; these read KIQN…PSEV and EAVH…KLKM. Basic residues predominate over residues 748 to 757; sequence YKKKYTKKAK. Residues 758-780 show a composition bias toward basic and acidic residues; it reads KDNDDAPKVKKAKKEEVPEEKVP.

The protein belongs to the JHDM1 histone demethylase family. JHDM1D subfamily. It depends on Fe(2+) as a cofactor. In terms of tissue distribution, mainly expressed in neurons. Also weakly expressed in some muscle, intestinal and hypodermal cells.

Its subcellular location is the nucleus. With respect to regulation, competitively inhibited by 2-hydroxyglutarate. Its function is as follows. Histone demethylase required for nervous system development. Specifically demethylates dimethylated 'Lys-9', 'Lys-23' and 'Lys-27' (H3K9me2, H3K23me2 and H3K27me2, respectively) of histone H3, thereby playing a central role in histone code. Promotes mitochondrial stress-induced longevity. This chain is Lysine-specific demethylase 7 homolog (jmjd-1.2), found in Caenorhabditis elegans.